The chain runs to 142 residues: Fluoride-specific ion channel FluC 1 (142 aa).

4 helical membrane-spanning segments follow: residues 17–37 (AWVSAGSVVGGLTRYLVGLAL), 42–62 (GFPFATLFINATGSLIIGFYA), 80–100 (FVMTGFCGGYTTFSAFSLETF), and 109–129 (YIALAYVASSVVCWLVSVWLG). Na(+) is bound by residues glycine 87 and threonine 90.

It belongs to the fluoride channel Fluc/FEX (TC 1.A.43) family.

It is found in the cell inner membrane. The enzyme catalyses fluoride(in) = fluoride(out). Na(+) is not transported, but it plays an essential structural role and its presence is essential for fluoride channel function. Its function is as follows. Fluoride-specific ion channel. Important for reducing fluoride concentration in the cell, thus reducing its toxicity. The chain is Fluoride-specific ion channel FluC 1 from Bradyrhizobium diazoefficiens (strain JCM 10833 / BCRC 13528 / IAM 13628 / NBRC 14792 / USDA 110).